The sequence spans 74 residues: uncharacterized protein (74 aa).

This is an uncharacterized protein from Rickettsia conorii (strain ATCC VR-613 / Malish 7).